The primary structure comprises 475 residues: Ribulose bisphosphate carboxylase large chain (475 aa).

A propeptide spanning residues 1-2 is cleaved from the precursor; it reads MS. Proline 3 is modified (N-acetylproline). Lysine 14 carries the post-translational modification N6,N6,N6-trimethyllysine. The substrate site is built by asparagine 123 and threonine 173. Catalysis depends on lysine 175, which acts as the Proton acceptor. Lysine 177 serves as a coordination point for substrate. 3 residues coordinate Mg(2+): lysine 201, aspartate 203, and glutamate 204. Residue lysine 201 is modified to N6-carboxylysine. The active-site Proton acceptor is the histidine 294. Substrate contacts are provided by arginine 295, histidine 327, and serine 379.

The protein belongs to the RuBisCO large chain family. Type I subfamily. In terms of assembly, heterohexadecamer of 8 large chains and 8 small chains; disulfide-linked. The disulfide link is formed within the large subunit homodimers. It depends on Mg(2+) as a cofactor. Post-translationally, the disulfide bond which can form in the large chain dimeric partners within the hexadecamer appears to be associated with oxidative stress and protein turnover.

It localises to the plastid. It is found in the chloroplast. The catalysed reaction is 2 (2R)-3-phosphoglycerate + 2 H(+) = D-ribulose 1,5-bisphosphate + CO2 + H2O. It catalyses the reaction D-ribulose 1,5-bisphosphate + O2 = 2-phosphoglycolate + (2R)-3-phosphoglycerate + 2 H(+). RuBisCO catalyzes two reactions: the carboxylation of D-ribulose 1,5-bisphosphate, the primary event in carbon dioxide fixation, as well as the oxidative fragmentation of the pentose substrate in the photorespiration process. Both reactions occur simultaneously and in competition at the same active site. This Atriplex rosea (Red orache) protein is Ribulose bisphosphate carboxylase large chain.